Here is a 406-residue protein sequence, read N- to C-terminus: Linalool 8-monooxygenase (406 aa).

C355 serves as a coordination point for heme.

Belongs to the cytochrome P450 family. Requires heme as cofactor.

The enzyme catalyses linalool + 2 reduced [NADPH--hemoprotein reductase] + 2 O2 = (6E)-8-oxolinalool + 2 oxidized [NADPH--hemoprotein reductase] + 3 H2O + 2 H(+). It functions in the pathway terpene metabolism; linalool degradation. Its function is as follows. Catalyzes the 8-methyl hydroxylation of linalool. In Pseudomonas putida (Arthrobacter siderocapsulatus), this protein is Linalool 8-monooxygenase (linC).